Consider the following 349-residue polypeptide: 4-hydroxy-tetrahydrodipicolinate reductase 2, chloroplastic (349 aa).

A chloroplast-targeting transit peptide spans 1-53 (MAANGLMAASSVFLHRPVHPHFSFSSRTNQMVPLGFKGRVSFIGNVKRCFPVV). NAD(+)-binding positions include 81–86 (GCSGKM), 173–175 (GTT), and 196–199 (SPQM). Histidine 232 acts as the Proton donor/acceptor in catalysis. Lysine 236 acts as the Proton donor in catalysis. 241-242 (GT) is a binding site for (S)-2,3,4,5-tetrahydrodipicolinate.

Belongs to the DapB family.

The protein resides in the plastid. Its subcellular location is the chloroplast. The catalysed reaction is (S)-2,3,4,5-tetrahydrodipicolinate + NAD(+) + H2O = (2S,4S)-4-hydroxy-2,3,4,5-tetrahydrodipicolinate + NADH + H(+). It carries out the reaction (S)-2,3,4,5-tetrahydrodipicolinate + NADP(+) + H2O = (2S,4S)-4-hydroxy-2,3,4,5-tetrahydrodipicolinate + NADPH + H(+). It functions in the pathway amino-acid biosynthesis; L-lysine biosynthesis via DAP pathway; (S)-tetrahydrodipicolinate from L-aspartate: step 4/4. Catalyzes the conversion of 4-hydroxy-tetrahydrodipicolinate (HTPA) to tetrahydrodipicolinate. The sequence is that of 4-hydroxy-tetrahydrodipicolinate reductase 2, chloroplastic (DAPB2) from Arabidopsis thaliana (Mouse-ear cress).